A 510-amino-acid chain; its full sequence is MDGFCDQQVPFMVPGKSRSEDCRGRPLIDRKRKFVDTDLAHDSEELFQDLSQLQEAWLAEAQVPDDEQFVPDFQSDNLVLHAPPPTKIKRELHSPSSELSSCSHEQALGAKYGEKCLYNYCAYDRKPPSGFKPLTPPATPLSPTHQNSLFPPPQATLPTSGLTPGAGPVQGVGPAPTPHSLPEPGSQQQTFAVPRPPHQPLQMPKMMPESQYPSEQRFQRQLSEPSHPFPPQSGVPGDSRPSYHRQMSEPIVPAAPPPLQGFKQEYHDPLYEHGVPGMPGPPAHGFQSPMGIKQEPRDYCADSEVPNCQSSYMRGGYFSSSHEGFPYEKDPRLYFDDTCVVPERLEGKVKQEPTMYREGPPYQRRGSLQLWQFLVTLLDDPANAHFIAWTGRGMEFKLIEPEEVARRWGIQKNRPAMNYDKLSRSLRYYYEKGIMQKVAGERYVYKFVCDPDALFSMAFPDNQRPFLKAESECPLNEEDTLPLTHFEDNPAYLLDMDRCSSLPYTEGFAY.

The tract at residues 132–245 is disordered; sequence KPLTPPATPL…PGDSRPSYHR (114 aa). Low complexity predominate over residues 163 to 174; the sequence is TPGAGPVQGVGP. The segment covering 211–224 has biased composition (polar residues); it reads QYPSEQRFQRQLSE. Position 248 is a phosphoserine (serine 248). Lysine 350 participates in a covalent cross-link: Glycyl lysine isopeptide (Lys-Gly) (interchain with G-Cter in SUMO2). The ETS DNA-binding region spans 368–448; the sequence is LQLWQFLVTL…AGERYVYKFV (81 aa).

Belongs to the ETS family. As to quaternary structure, interacts (via C-terminal) with ZMYM5 (via N-terminal 120 amino acid region). In the brain, expressed predominantly in the cerebral cortex, the amygdala and the hypothalamus. Within the cerebral cortex, there is conspicuously high expression in cortical layers 2, 4 and 6 while expression is almost absent from layers 1, 3 and 5. High expression is also observed in the dorsal and ventral endopiriform claustrum. Strong expression is observed in limited parts of the amygdala including the basolateral amygdaloid nucleus, the bed stria terminalis and the central amygdaloid nucleus. Low to moderate levels are found in the hypothalamus while expression is almost absent in the thalamus. Hypothalamic expression is seen in the dorsomedial hypothalamic nucleus and also the central, dorsomedial and ventrolateral parts of the ventromedial hypothalamic nucleus. Strong expression is also identified in the nigrostriatal tract. In the mesencephalon, expression is restricted to the ventral tegmental area including the parabrachial pigmented nucleus. In the hippocampus, strongly expressed in the pyramidal cell layer. Some expression is also found in the lacunosum moleculare layer. Low levels of expression in the cerebellum, including the granular, molecular and Purkinje cell layers.

It localises to the nucleus. Its function is as follows. Binds to DNA sequences containing the consensus nucleotide core sequence 5'-GGAA.-3'. This is ETS translocation variant 5 (Etv5) from Mus musculus (Mouse).